The following is a 599-amino-acid chain: Matrix metallopeptidase-21 (599 aa).

Residues 1-20 form the signal peptide; the sequence is MLTVIRRIFIIQTFIFITAE. Residues 21–170 constitute a propeptide that is removed on maturation; the sequence is KIFHSRDHSD…NHEHQAPVRK (150 aa). Residue Cys130 coordinates Zn(2+). Residues 141–170 form a disordered region; it reads DVTGSNSTRNHIRTSTNTSHNHEHQAPVRK. A compositionally biased stretch (polar residues) spans 143-159; the sequence is TGSNSTRNHIRTSTNTS. Residue His309 participates in Zn(2+) binding. The active site involves Glu310. Positions 313 and 319 each coordinate Zn(2+). Residues Cys355 and Cys586 are joined by a disulfide bond. Hemopexin repeat units lie at residues 356–415, 417–473, 474–522, and 529–585; these read TGRF…WHGL, SGGV…FPGV, SGPL…FPAI, and VRSL…WFDI. Residue Asn398 is glycosylated (N-linked (GlcNAc...) asparagine).

It belongs to the peptidase M10A family. In terms of processing, the precursor is cleaved by a furin endopeptidase.

In terms of biological role, plays a specialized role in the generation of left-right asymmetry during embryogenesis. May act as a negative regulator of the NOTCH-signaling pathway. In Danio rerio (Zebrafish), this protein is Matrix metallopeptidase-21.